The primary structure comprises 156 residues: Ribosomal RNA large subunit methyltransferase H (156 aa).

S-adenosyl-L-methionine-binding positions include Gly-104 and 123–128; that span reads LSALTL.

The protein belongs to the RNA methyltransferase RlmH family. Homodimer.

The protein resides in the cytoplasm. The catalysed reaction is pseudouridine(1915) in 23S rRNA + S-adenosyl-L-methionine = N(3)-methylpseudouridine(1915) in 23S rRNA + S-adenosyl-L-homocysteine + H(+). In terms of biological role, specifically methylates the pseudouridine at position 1915 (m3Psi1915) in 23S rRNA. In Nitrosospira multiformis (strain ATCC 25196 / NCIMB 11849 / C 71), this protein is Ribosomal RNA large subunit methyltransferase H.